The following is a 138-amino-acid chain: Putative pre-16S rRNA nuclease (138 aa).

Belongs to the YqgF nuclease family.

Its subcellular location is the cytoplasm. In terms of biological role, could be a nuclease involved in processing of the 5'-end of pre-16S rRNA. The sequence is that of Putative pre-16S rRNA nuclease from Caldicellulosiruptor bescii (strain ATCC BAA-1888 / DSM 6725 / KCTC 15123 / Z-1320) (Anaerocellum thermophilum).